Reading from the N-terminus, the 272-residue chain is Acyl-[acyl-carrier-protein]--UDP-N-acetylglucosamine O-acyltransferase (272 aa).

The protein belongs to the transferase hexapeptide repeat family. LpxA subfamily. Homotrimer.

The protein resides in the cytoplasm. It carries out the reaction a (3R)-hydroxyacyl-[ACP] + UDP-N-acetyl-alpha-D-glucosamine = a UDP-3-O-[(3R)-3-hydroxyacyl]-N-acetyl-alpha-D-glucosamine + holo-[ACP]. It functions in the pathway glycolipid biosynthesis; lipid IV(A) biosynthesis; lipid IV(A) from (3R)-3-hydroxytetradecanoyl-[acyl-carrier-protein] and UDP-N-acetyl-alpha-D-glucosamine: step 1/6. Functionally, involved in the biosynthesis of lipid A, a phosphorylated glycolipid that anchors the lipopolysaccharide to the outer membrane of the cell. The protein is Acyl-[acyl-carrier-protein]--UDP-N-acetylglucosamine O-acyltransferase of Rhizobium johnstonii (strain DSM 114642 / LMG 32736 / 3841) (Rhizobium leguminosarum bv. viciae).